A 229-amino-acid chain; its full sequence is Platelet-activating factor acetylhydrolase IB subunit alpha2 (229 aa).

The residue at position 2 (S2) is an N-acetylserine. S2 is subject to Phosphoserine. S48 is an active-site residue. A Phosphoserine modification is found at S64. Active-site residues include D193 and H196. T220 is subject to Phosphothreonine.

It belongs to the 'GDSL' lipolytic enzyme family. Platelet-activating factor acetylhydrolase IB beta/gamma subunits subfamily. Forms a catalytic dimer which is either homodimer (alpha2/alpha2 homodimer) or heterodimer with PAFAH1B3 (alpha2/alpha1 heterodimer). Component of the cytosolic (PAF-AH (I)) heterotetrameric enzyme, which is composed of PAFAH1B1 (beta), PAFAH1B2 (alpha2) and PAFAH1B3 (alpha1) subunits. The catalytic activity of the enzyme resides in the alpha1 (PAFAH1B3) and alpha2 (PAFAH1B2) subunits, whereas the beta subunit (PAFAH1B1) has regulatory activity. Trimer formation is not essential for the catalytic activity. Interacts (homodimer form) with PAFAH1B1 (homodimer form); PAFAH1B2 competes with NDEL1 for PAFAH1B1 binding. Interacts with VLDLR; this interaction may modulate the Reelin pathway.

It localises to the cytoplasm. The enzyme catalyses a 1-O-alkyl-2-acetyl-sn-glycero-3-phosphocholine + H2O = a 1-O-alkyl-sn-glycero-3-phosphocholine + acetate + H(+). It carries out the reaction 1-O-hexadecyl-2-acetyl-sn-glycero-3-phosphocholine + H2O = 1-O-hexadecyl-sn-glycero-3-phosphocholine + acetate + H(+). The catalysed reaction is 1-O-hexadecyl-2-acetyl-sn-glycero-3-phosphate + H2O = 1-O-hexadecyl-sn-glycero-3-phosphate + acetate + H(+). It catalyses the reaction 1-O-hexadecyl-2-acetyl-sn-glycero-3-phosphoethanolamine + H2O = 1-O-hexadecyl-sn-glycero-3-phosphoethanolamine + acetate + H(+). With respect to regulation, beta subunit (PAFAH1B1) stimulates the acetylhydrolase activity of the alpha2/alpha2 catalytic homodimer. Its function is as follows. Alpha2 catalytic subunit of the cytosolic type I platelet-activating factor (PAF) acetylhydrolase (PAF-AH (I)) heterotetrameric enzyme that catalyzes the hydrolyze of the acetyl group at the sn-2 position of PAF and its analogs and modulates the action of PAF. The activity and substrate specificity of PAF-AH (I) are affected by its subunit composition. The alpha2/alpha2 homodimer (PAFAH1B2/PAFAH1B2 homodimer) hydrolyzes PAF and 1-O-alkyl-2-acetyl-sn-glycero-3-phosphorylethanolamine (AAGPE) more efficiently than 1-O-alkyl-2-acetyl-sn-glycero-3-phosphoric acid (AAGPA). In contrast, the alpha1/alpha2 heterodimer(PAFAH1B3/PAFAH1B3 heterodimer) hydrolyzes AAGPA more efficiently than PAF, but has little hydrolytic activity towards AAGPE. May play a role in male germ cell meiosis during the late pachytenestage and meiotic divisions as well as early spermiogenesis. This Pongo abelii (Sumatran orangutan) protein is Platelet-activating factor acetylhydrolase IB subunit alpha2.